Reading from the N-terminus, the 113-residue chain is Putative single-stranded DNA-binding protein ycf41 (113 aa).

Positions 1 to 101 constitute an SSB domain; it reads MNYASFIIKI…EVSGFKIYPF (101 aa).

The protein resides in the plastid. It is found in the chloroplast. The polypeptide is Putative single-stranded DNA-binding protein ycf41 (ycf41) (Trieres chinensis (Marine centric diatom)).